The chain runs to 230 residues: SPbeta prophage-derived putative HNH endonuclease YoqL (230 aa).

The HNH domain maps to 136–188 (CSYCGLKIEDHKILFKGTYIQSDFHKEHVDHKGANDISNCIPACKSCNSSKHD).

Belongs to the HNH nuclease family.

In Bacillus subtilis (strain 168), this protein is SPbeta prophage-derived putative HNH endonuclease YoqL (yoqL).